Consider the following 93-residue polypeptide: Small ribosomal subunit protein bS6 (93 aa).

Belongs to the bacterial ribosomal protein bS6 family.

Functionally, binds together with bS18 to 16S ribosomal RNA. The sequence is that of Small ribosomal subunit protein bS6 from Phytoplasma australiense.